Consider the following 551-residue polypeptide: Trehalose-6-phosphate hydrolase (551 aa).

Asp-200 (nucleophile) is an active-site residue. Residue Glu-251 is the Proton donor of the active site.

The protein belongs to the glycosyl hydrolase 13 family.

It localises to the cytoplasm. It carries out the reaction alpha,alpha-trehalose 6-phosphate + H2O = D-glucose 6-phosphate + D-glucose. In terms of biological role, hydrolyzes trehalose-6-phosphate to glucose and glucose 6-phosphate. Can also very effectively hydrolyze p-nitrophenyl-alpha-D-glucopyranoside, but it does not recognize trehalose, sucrose, maltose, isomaltose, or maltodextrins. This chain is Trehalose-6-phosphate hydrolase (treC), found in Escherichia coli (strain K12).